The sequence spans 170 residues: Cytochrome c-type biogenesis protein CcmE (170 aa).

At 1-7 (MTRKKRR) the chain is on the cytoplasmic side. Residues 8 to 28 (LILIAACGSVLALAVGLILYA) form a helical; Signal-anchor for type II membrane protein membrane-spanning segment. At 29–170 (MSGSIVFFRS…DSTLGPRSER (142 aa)) the chain is on the periplasmic side. 2 residues coordinate heme: histidine 122 and tyrosine 126. Positions 132 to 170 (ADALKAQGRWQEGGPNRGGPAPKPATAAADSTLGPRSER) are disordered.

Belongs to the CcmE/CycJ family.

Its subcellular location is the cell inner membrane. Heme chaperone required for the biogenesis of c-type cytochromes. Transiently binds heme delivered by CcmC and transfers the heme to apo-cytochromes in a process facilitated by CcmF and CcmH. The chain is Cytochrome c-type biogenesis protein CcmE from Methylobacterium radiotolerans (strain ATCC 27329 / DSM 1819 / JCM 2831 / NBRC 15690 / NCIMB 10815 / 0-1).